Reading from the N-terminus, the 160-residue chain is Putative oxygenase ATEG_00330 (160 aa).

An EthD domain is found at 24 to 100; the sequence is HYFGTALHAK…RNIAADPEFA (77 aa).

This sequence belongs to the tpcK family.

In terms of biological role, putative oxygenase; part of the gene cluster that mediates the biosynthesis of isoflavipucine. The PKS part of the PKS-NRPS ATEG_00325 probably assembles a triketide from an acetyl starter and two malonyl-CoA extender units. The poly-beta-keto intermediate would then be fused to the leucine unit by the NRPS part. The resulting amide would be liberated from the PKS-NRPS through reductive release of the linear PKS-NRPS product from the enzyme complex. Further steps in isoflapucine synthesis include a cyclization step, an oxidation step, a hydrolysis step involving a trans-amidation, and an additional oxidation step, leading to flavipucine. Formation of isoflavipucine from flavipucine requires an unusual rearrangement. Alternative rearrangement reactions could build up rubrobramide, representing a branching of flavipucine biosynthesis. The enzymes involved in the post-PKS-NRPS steps have not been identified yet, but the putative oxygenases ATEG_003329 and ATEG_00330 encoded by the cluster could play a role. This is Putative oxygenase ATEG_00330 from Aspergillus terreus (strain NIH 2624 / FGSC A1156).